The primary structure comprises 76 residues: UPF0729 protein C18orf32 homolog (76 aa).

The interval 1–37 (MVCIPCIVIPVLLWVYKKFLEPYIYPLISPFVSRMWP) is necessary for its localzation to the endoplasmic reticulum and lipid droplets. The segment covering 47 to 56 (KNKGKVDYKG) has biased composition (basic and acidic residues). Residues 47 to 76 (KNKGKVDYKGADINGLPTRGPTEMCDKKKD) form a disordered region.

It belongs to the UPF0729 family. Interacts with DERL1 and AMFR. In terms of processing, undergoes ER-associated degradation (ERAD).

Its subcellular location is the endoplasmic reticulum. The protein localises to the lipid droplet. Its function is as follows. May activate the NF-kappa-B signaling pathway. This is UPF0729 protein C18orf32 homolog from Bos taurus (Bovine).